The sequence spans 557 residues: Dihydroxy-acid dehydratase (557 aa).

C47 is a [2Fe-2S] cluster binding site. Residue D79 coordinates Mg(2+). C120 is a [2Fe-2S] cluster binding site. Residues D121 and K122 each contribute to the Mg(2+) site. K122 is subject to N6-carboxylysine. C192 contributes to the [2Fe-2S] cluster binding site. E444 lines the Mg(2+) pocket. The Proton acceptor role is filled by S470.

The protein belongs to the IlvD/Edd family. Homodimer. It depends on [2Fe-2S] cluster as a cofactor. Mg(2+) serves as cofactor.

The enzyme catalyses (2R)-2,3-dihydroxy-3-methylbutanoate = 3-methyl-2-oxobutanoate + H2O. It carries out the reaction (2R,3R)-2,3-dihydroxy-3-methylpentanoate = (S)-3-methyl-2-oxopentanoate + H2O. It functions in the pathway amino-acid biosynthesis; L-isoleucine biosynthesis; L-isoleucine from 2-oxobutanoate: step 3/4. Its pathway is amino-acid biosynthesis; L-valine biosynthesis; L-valine from pyruvate: step 3/4. In terms of biological role, functions in the biosynthesis of branched-chain amino acids. Catalyzes the dehydration of (2R,3R)-2,3-dihydroxy-3-methylpentanoate (2,3-dihydroxy-3-methylvalerate) into 2-oxo-3-methylpentanoate (2-oxo-3-methylvalerate) and of (2R)-2,3-dihydroxy-3-methylbutanoate (2,3-dihydroxyisovalerate) into 2-oxo-3-methylbutanoate (2-oxoisovalerate), the penultimate precursor to L-isoleucine and L-valine, respectively. The chain is Dihydroxy-acid dehydratase from Synechococcus sp. (strain CC9605).